A 245-amino-acid chain; its full sequence is Thiopurine S-methyltransferase (245 aa).

Position 14 is a phosphoserine (serine 14). S-adenosyl-L-methionine is bound at residue 29–40 (WQGKWVTGKTIF). Phenylalanine 40 contributes to the substrate binding site. N6-acetyllysine is present on lysine 58. S-adenosyl-L-methionine-binding residues include leucine 69, glutamate 90, and arginine 152.

Belongs to the class I-like SAM-binding methyltransferase superfamily. TPMT family. As to quaternary structure, monomer.

The protein localises to the cytoplasm. The enzyme catalyses S-adenosyl-L-methionine + a thiopurine = S-adenosyl-L-homocysteine + a thiopurine S-methylether.. The chain is Thiopurine S-methyltransferase (TPMT) from Equus caballus (Horse).